We begin with the raw amino-acid sequence, 93 residues long: Acylphosphatase (93 aa).

Positions 6–93 (RARIVVSGRV…GDLGAFEIRF (88 aa)) constitute an Acylphosphatase-like domain. Catalysis depends on residues arginine 21 and asparagine 39.

This sequence belongs to the acylphosphatase family.

It carries out the reaction an acyl phosphate + H2O = a carboxylate + phosphate + H(+). The protein is Acylphosphatase (acyP) of Anaeromyxobacter dehalogenans (strain 2CP-C).